Consider the following 208-residue polypeptide: Peptidyl-prolyl cis-trans isomerase FKBP13, chloroplastic (208 aa).

Disulfide bonds link C84/C96 and C185/C190. Residues 109-208 (GQLIKAHYVG…LFDIEYIGKA (100 aa)) form the PPIase FKBP-type domain.

The protein belongs to the FKBP-type PPIase family. As to quaternary structure, interacts in vitro with LTO1. The precursor, but not the mature form of the protein, interacts with the Rieske protein. As to expression, expressed in stems, leaves and developing flower buds, but not in roots.

It localises to the plastid. The protein resides in the chloroplast thylakoid lumen. It carries out the reaction [protein]-peptidylproline (omega=180) = [protein]-peptidylproline (omega=0). Its activity is regulated as follows. PPIase activity is optimal in oxidized form (S-S) and minimal in reduced form (SH). Reduction of the oxidized form is mediated by thioredoxin (TRX-M). In terms of biological role, PPIases accelerate the folding of proteins. It catalyzes the cis-trans isomerization of proline imidic peptide bonds in oligopeptides. Responsive of the major PPIase activity in the chloroplast thylakoid lumen. Regulates the accumulation of Rieske protein, an essential component of the photosynthetic electron transport chain. This is Peptidyl-prolyl cis-trans isomerase FKBP13, chloroplastic from Arabidopsis thaliana (Mouse-ear cress).